The chain runs to 201 residues: UPF0056 membrane protein PYRAB13050 (201 aa).

The next 6 helical transmembrane spans lie at 8-28 (FAVL…VPIF), 49-69 (ITVL…FKFF), 73-93 (VDAF…EMLS), 111-131 (VAVI…TTVM), 140-160 (PIVI…LASG), and 181-201 (LILT…AFGI).

Belongs to the UPF0056 (MarC) family.

It is found in the cell membrane. This is UPF0056 membrane protein PYRAB13050 from Pyrococcus abyssi (strain GE5 / Orsay).